The primary structure comprises 393 residues: Probable acetyl-CoA acetyltransferase (393 aa).

Cys88 serves as the catalytic Acyl-thioester intermediate. Catalysis depends on proton acceptor residues His349 and Cys379.

The protein belongs to the thiolase-like superfamily. Thiolase family.

It catalyses the reaction 2 acetyl-CoA = acetoacetyl-CoA + CoA. In Mycobacterium leprae (strain TN), this protein is Probable acetyl-CoA acetyltransferase (fadA4).